The following is a 120-amino-acid chain: Large ribosomal subunit protein uL18 (120 aa).

Belongs to the universal ribosomal protein uL18 family. As to quaternary structure, part of the 50S ribosomal subunit; part of the 5S rRNA/L5/L18/L25 subcomplex. Contacts the 5S and 23S rRNAs.

Its function is as follows. This is one of the proteins that bind and probably mediate the attachment of the 5S RNA into the large ribosomal subunit, where it forms part of the central protuberance. This chain is Large ribosomal subunit protein uL18, found in Chloroflexus aurantiacus (strain ATCC 29364 / DSM 637 / Y-400-fl).